A 95-amino-acid polypeptide reads, in one-letter code: Small ribosomal subunit protein bS16 (95 aa).

The protein belongs to the bacterial ribosomal protein bS16 family.

This Streptococcus pneumoniae (strain CGSP14) protein is Small ribosomal subunit protein bS16.